A 245-amino-acid chain; its full sequence is Biosynthetic peptidoglycan transglycosylase (245 aa).

A helical transmembrane segment spans residues 10–30 (FLALLFVVATLAQLWYLGQVL). Positions 224–245 (DPGTVPLPPPPEPTAPPEGNTQ) are disordered. The span at 226–239 (GTVPLPPPPEPTAP) shows a compositional bias: pro residues.

The protein belongs to the glycosyltransferase 51 family.

The protein resides in the cell inner membrane. It carries out the reaction [GlcNAc-(1-&gt;4)-Mur2Ac(oyl-L-Ala-gamma-D-Glu-L-Lys-D-Ala-D-Ala)](n)-di-trans,octa-cis-undecaprenyl diphosphate + beta-D-GlcNAc-(1-&gt;4)-Mur2Ac(oyl-L-Ala-gamma-D-Glu-L-Lys-D-Ala-D-Ala)-di-trans,octa-cis-undecaprenyl diphosphate = [GlcNAc-(1-&gt;4)-Mur2Ac(oyl-L-Ala-gamma-D-Glu-L-Lys-D-Ala-D-Ala)](n+1)-di-trans,octa-cis-undecaprenyl diphosphate + di-trans,octa-cis-undecaprenyl diphosphate + H(+). Its pathway is cell wall biogenesis; peptidoglycan biosynthesis. In terms of biological role, peptidoglycan polymerase that catalyzes glycan chain elongation from lipid-linked precursors. In Alcanivorax borkumensis (strain ATCC 700651 / DSM 11573 / NCIMB 13689 / SK2), this protein is Biosynthetic peptidoglycan transglycosylase.